Here is a 144-residue protein sequence, read N- to C-terminus: Cytochrome c oxidase subunit 4 isoform 1, mitochondrial (144 aa).

Residues 1 to 73 are Mitochondrial matrix-facing; the sequence is SVVKSEDFTL…SFAEMNRRSN (73 aa). Lys-4 bears the N6-acetyllysine; alternate mark. Lys-4 bears the N6-succinyllysine; alternate mark. The residue at position 28 (Lys-28) is an N6-acetyllysine. 2 positions are modified to phosphoserine: Ser-31 and Ser-33. Residue Lys-35 is modified to N6-acetyllysine; alternate. Lys-35 is subject to N6-succinyllysine; alternate. Lys-42 is subject to N6-acetyllysine. A helical membrane pass occupies residues 74 to 99; it reads EWKTVVGTAMFFFGITALIVMWEKRY. At 100 to 144 the chain is on the mitochondrial intermembrane side; the sequence is VYGPLPQTFDKEWVAMQTKRMLDMKVNPIQGLASKWDYEKNEWKK.

The protein belongs to the cytochrome c oxidase IV family. Component of the cytochrome c oxidase (complex IV, CIV), a multisubunit enzyme composed of 14 subunits. The complex is composed of a catalytic core of 3 subunits MT-CO1, MT-CO2 and MT-CO3, encoded in the mitochondrial DNA, and 11 supernumerary subunits COX4I, COX5A, COX5B, COX6A, COX6B, COX6C, COX7A, COX7B, COX7C, COX8 and NDUFA4, which are encoded in the nuclear genome. The complex exists as a monomer or a dimer and forms supercomplexes (SCs) in the inner mitochondrial membrane with NADH-ubiquinone oxidoreductase (complex I, CI) and ubiquinol-cytochrome c oxidoreductase (cytochrome b-c1 complex, complex III, CIII), resulting in different assemblies (supercomplex SCI(1)III(2)IV(1) and megacomplex MCI(2)III(2)IV(2)). Interacts with PHB2; the interaction decreases in absence of SPHK2. Interacts with AFG1L. Interacts with ABCB7; this interaction allows the regulation of cellular iron homeostasis and cellular reactive oxygen species (ROS) levels in cardiomyocytes. Interacts with FLVCR2; this interaction occurs in the absence of heme and is disrupted upon heme binding. Interacts with IRGC.

Its subcellular location is the mitochondrion inner membrane. It participates in energy metabolism; oxidative phosphorylation. Component of the cytochrome c oxidase, the last enzyme in the mitochondrial electron transport chain which drives oxidative phosphorylation. The respiratory chain contains 3 multisubunit complexes succinate dehydrogenase (complex II, CII), ubiquinol-cytochrome c oxidoreductase (cytochrome b-c1 complex, complex III, CIII) and cytochrome c oxidase (complex IV, CIV), that cooperate to transfer electrons derived from NADH and succinate to molecular oxygen, creating an electrochemical gradient over the inner membrane that drives transmembrane transport and the ATP synthase. Cytochrome c oxidase is the component of the respiratory chain that catalyzes the reduction of oxygen to water. Electrons originating from reduced cytochrome c in the intermembrane space (IMS) are transferred via the dinuclear copper A center (CU(A)) of subunit 2 and heme A of subunit 1 to the active site in subunit 1, a binuclear center (BNC) formed by heme A3 and copper B (CU(B)). The BNC reduces molecular oxygen to 2 water molecules using 4 electrons from cytochrome c in the IMS and 4 protons from the mitochondrial matrix. The protein is Cytochrome c oxidase subunit 4 isoform 1, mitochondrial (COX4I1) of Theropithecus gelada (Gelada baboon).